The chain runs to 291 residues: MAAITAALIKQVREETGAGMMDVKKALTEAEGDVARAKEIIRAKGIQAAGKREGRKAQEGTIASTVVESANGQTGYAVELNSETDFVAKTPKFVEFAGSVLDDAVKAEASSVDEVLAAASGDTTVKEAVEEAAALFGEHVKVGQFAKVEGPHVEVYAHKKSAEMPPSIVAMIATDEAGAAVAHEAALQISAMGAQWLTREDVPADVLESERRVATEKTTEELKSKGKPEAVIEKIAPKIVEGRLGAFYKETVLLEQAYVKDPSKTVGDLFKEVGGTALSFARVEVGKGDAE.

The tract at residues 84–87 (TDFV) is involved in Mg(2+) ion dislocation from EF-Tu.

This sequence belongs to the EF-Ts family.

It localises to the cytoplasm. Functionally, associates with the EF-Tu.GDP complex and induces the exchange of GDP to GTP. It remains bound to the aminoacyl-tRNA.EF-Tu.GTP complex up to the GTP hydrolysis stage on the ribosome. The sequence is that of Elongation factor Ts from Bifidobacterium adolescentis (strain ATCC 15703 / DSM 20083 / NCTC 11814 / E194a).